The primary structure comprises 91 residues: Long neurotoxin OH-37 (91 aa).

Positions 1–21 (MKTLLLTLVVMTIVCLDLGYS) are cleaved as a signal peptide. Intrachain disulfides connect cysteine 24-cysteine 41, cysteine 34-cysteine 62, cysteine 47-cysteine 51, cysteine 66-cysteine 77, and cysteine 78-cysteine 83.

It belongs to the three-finger toxin family. Long-chain subfamily. Type II alpha-neurotoxin sub-subfamily. Expressed by the venom gland.

Its subcellular location is the secreted. Functionally, binds with high affinity to muscular (alpha-1/CHRNA1) and neuronal (alpha-7/CHRNA7) nicotinic acetylcholine receptor (nAChR) and inhibits acetylcholine from binding to the receptor, thereby impairing neuromuscular and neuronal transmission. This is Long neurotoxin OH-37 from Ophiophagus hannah (King cobra).